The primary structure comprises 563 residues: Phospholipase B-like protein F (563 aa).

The N-terminal stretch at 1-21 is a signal peptide; the sequence is MKIINSFVFIFVLLFVFNTNA. Residues Asn-85, Asn-107, Asn-118, Asn-121, Asn-208, Asn-312, and Asn-537 are each glycosylated (N-linked (GlcNAc...) asparagine).

It belongs to the phospholipase B-like family.

The protein localises to the secreted. In terms of biological role, probable phospholipase. The protein is Phospholipase B-like protein F (plbF) of Dictyostelium discoideum (Social amoeba).